The following is a 144-amino-acid chain: Large ribosomal subunit protein uL14 (144 aa).

It belongs to the universal ribosomal protein uL14 family. Part of the 50S ribosomal subunit. Forms a cluster with proteins L3 and L24e, part of which may contact the 16S rRNA in 2 intersubunit bridges.

Functionally, binds to 23S rRNA. Forms part of two intersubunit bridges in the 70S ribosome. The polypeptide is Large ribosomal subunit protein uL14 (Pyrobaculum islandicum (strain DSM 4184 / JCM 9189 / GEO3)).